The primary structure comprises 273 residues: 5-deoxy-glucuronate isomerase (273 aa).

Belongs to the isomerase IolB family.

The catalysed reaction is 5-deoxy-D-glucuronate = 5-dehydro-2-deoxy-D-gluconate. It functions in the pathway polyol metabolism; myo-inositol degradation into acetyl-CoA; acetyl-CoA from myo-inositol: step 4/7. Involved in the isomerization of 5-deoxy-glucuronate (5DG) to 5-dehydro-2-deoxy-D-gluconate (DKG or 2-deoxy-5-keto-D-gluconate). This is 5-deoxy-glucuronate isomerase from Listeria innocua serovar 6a (strain ATCC BAA-680 / CLIP 11262).